We begin with the raw amino-acid sequence, 64 residues long: Large ribosomal subunit protein eL37 (64 aa).

The C4-type zinc finger occupies 1–6 (GRCSAC). Positions 3 and 6 each coordinate Zn(2+).

This sequence belongs to the eukaryotic ribosomal protein eL37 family. It depends on Zn(2+) as a cofactor.

In terms of biological role, binds to the 23S rRNA. The chain is Large ribosomal subunit protein eL37 (RPL37) from Solanum lycopersicum (Tomato).